We begin with the raw amino-acid sequence, 175 residues long: ATP synthase subunit b, chloroplastic (175 aa).

The helical transmembrane segment at valine 26 to valine 44 threads the bilayer.

Belongs to the ATPase B chain family. In terms of assembly, F-type ATPases have 2 components, F(1) - the catalytic core - and F(0) - the membrane proton channel. F(1) has five subunits: alpha(3), beta(3), gamma(1), delta(1), epsilon(1). F(0) has four main subunits: a(1), b(1), b'(1) and c(10-14). The alpha and beta chains form an alternating ring which encloses part of the gamma chain. F(1) is attached to F(0) by a central stalk formed by the gamma and epsilon chains, while a peripheral stalk is formed by the delta, b and b' chains.

The protein resides in the plastid. The protein localises to the chloroplast thylakoid membrane. In terms of biological role, f(1)F(0) ATP synthase produces ATP from ADP in the presence of a proton or sodium gradient. F-type ATPases consist of two structural domains, F(1) containing the extramembraneous catalytic core and F(0) containing the membrane proton channel, linked together by a central stalk and a peripheral stalk. During catalysis, ATP synthesis in the catalytic domain of F(1) is coupled via a rotary mechanism of the central stalk subunits to proton translocation. Its function is as follows. Component of the F(0) channel, it forms part of the peripheral stalk, linking F(1) to F(0). The protein is ATP synthase subunit b, chloroplastic of Tupiella akineta (Green alga).